Reading from the N-terminus, the 543-residue chain is Glutamyl-tRNA(Gln) amidotransferase subunit A, chloroplastic/mitochondrial (543 aa).

Catalysis depends on charge relay system residues lysine 123 and serine 198. Serine 222 serves as the catalytic Acyl-ester intermediate.

This sequence belongs to the amidase family. GatA subfamily. In terms of assembly, subunit of the heterotrimeric GatCAB amidotransferase (AdT) complex, composed of A, B and C subunits.

The protein resides in the mitochondrion. It is found in the plastid. The protein localises to the chloroplast stroma. It catalyses the reaction L-glutamyl-tRNA(Gln) + L-glutamine + ATP + H2O = L-glutaminyl-tRNA(Gln) + L-glutamate + ADP + phosphate + H(+). In terms of biological role, allows the formation of correctly charged Gln-tRNA(Gln) through the transamidation of misacylated Glu-tRNA(Gln) in chloroplasts and mitochondria. The reaction takes place in the presence of glutamine and ATP through an activated gamma-phospho-Glu-tRNA(Gln). The sequence is that of Glutamyl-tRNA(Gln) amidotransferase subunit A, chloroplastic/mitochondrial from Oryza sativa subsp. japonica (Rice).